Here is a 374-residue protein sequence, read N- to C-terminus: Polar flagellin E (374 aa).

Residues 102–126 adopt a coiled-coil conformation; sequence SHEQDDRKSLQQEVIALQDELDRVA.

This sequence belongs to the bacterial flagellin family. As to quaternary structure, heteromer of multiple flagellin subunits including FlaA, FlaB/D, FlaC, FlaE and FlaF.

It localises to the secreted. The protein resides in the bacterial flagellum. Functionally, flagellin is the subunit protein which polymerizes to form the filaments of bacterial flagella. The chain is Polar flagellin E (flaE) from Vibrio parahaemolyticus serotype O3:K6 (strain RIMD 2210633).